The primary structure comprises 503 residues: Probable cytosol aminopeptidase (503 aa).

Mn(2+) is bound by residues lysine 270 and aspartate 275. Residue lysine 282 is part of the active site. Residues aspartate 293, aspartate 352, and glutamate 354 each contribute to the Mn(2+) site. Arginine 356 is an active-site residue.

It belongs to the peptidase M17 family. Requires Mn(2+) as cofactor.

It localises to the cytoplasm. It catalyses the reaction Release of an N-terminal amino acid, Xaa-|-Yaa-, in which Xaa is preferably Leu, but may be other amino acids including Pro although not Arg or Lys, and Yaa may be Pro. Amino acid amides and methyl esters are also readily hydrolyzed, but rates on arylamides are exceedingly low.. It carries out the reaction Release of an N-terminal amino acid, preferentially leucine, but not glutamic or aspartic acids.. Its function is as follows. Presumably involved in the processing and regular turnover of intracellular proteins. Catalyzes the removal of unsubstituted N-terminal amino acids from various peptides. This is Probable cytosol aminopeptidase from Salmonella agona (strain SL483).